The following is a 388-amino-acid chain: Nitric oxide reductase FlRd-NAD(+) reductase (388 aa).

Belongs to the FAD-dependent oxidoreductase family. It depends on FAD as a cofactor.

It is found in the cytoplasm. The enzyme catalyses 2 reduced [nitric oxide reductase rubredoxin domain] + NAD(+) + H(+) = 2 oxidized [nitric oxide reductase rubredoxin domain] + NADH. It participates in nitrogen metabolism; nitric oxide reduction. Its function is as follows. One of at least two accessory proteins for anaerobic nitric oxide (NO) reductase. Reduces the rubredoxin moiety of NO reductase. In Aeromonas salmonicida (strain A449), this protein is Nitric oxide reductase FlRd-NAD(+) reductase.